Here is a 188-residue protein sequence, read N- to C-terminus: RWD domain-containing protein 4 (188 aa).

Residues 9 to 111 form the RWD domain; the sequence is MELEALRSIY…EYAKDHKEQF (103 aa). The interval 132 to 167 is disordered; it reads TPTTAPSSKKKEKKEQLSKAQKRKLADKTDHKGELP. Residues 155 to 166 show a composition bias toward basic and acidic residues; that stretch reads KLADKTDHKGEL.

The chain is RWD domain-containing protein 4 (Rwdd4) from Mus musculus (Mouse).